The sequence spans 322 residues: Cysteine synthase (322 aa).

Asn8 and Arg35 together coordinate hydrogen sulfide. The residue at position 42 (Lys42) is an N6-(pyridoxal phosphate)lysine. Pyridoxal 5'-phosphate contacts are provided by residues Asn72 and 177–181; that span reads GTGGT. Residue Leu269 coordinates hydrogen sulfide. Ser273 is a binding site for pyridoxal 5'-phosphate.

Belongs to the cysteine synthase/cystathionine beta-synthase family. In terms of assembly, homodimer. Requires pyridoxal 5'-phosphate as cofactor.

It catalyses the reaction O-acetyl-L-serine + hydrogen sulfide = L-cysteine + acetate. It participates in amino-acid biosynthesis; L-cysteine biosynthesis; L-cysteine from L-serine: step 2/2. In Buchnera aphidicola subsp. Schizaphis graminum (strain Sg), this protein is Cysteine synthase (cysK).